The chain runs to 189 residues: Mediator of RNA polymerase II transcription subunit 30 (189 aa).

Residues 138-178 (SPESEDEIEKLEEQALSLRMEIAKKNVHVKELIDKLRELIA) adopt a coiled-coil conformation.

The protein belongs to the plant Mediator complex subunit 30 family. As to quaternary structure, component of the Mediator complex.

It is found in the nucleus. Functionally, component of the Mediator complex, a coactivator involved in the regulated transcription of nearly all RNA polymerase II-dependent genes. Mediator functions as a bridge to convey information from gene-specific regulatory proteins to the basal RNA polymerase II transcription machinery. The Mediator complex, having a compact conformation in its free form, is recruited to promoters by direct interactions with regulatory proteins and serves for the assembly of a functional preinitiation complex with RNA polymerase II and the general transcription factors. This Arabidopsis thaliana (Mouse-ear cress) protein is Mediator of RNA polymerase II transcription subunit 30 (MED30).